We begin with the raw amino-acid sequence, 188 residues long: Elongation factor P (188 aa).

This sequence belongs to the elongation factor P family.

It is found in the cytoplasm. Its pathway is protein biosynthesis; polypeptide chain elongation. Involved in peptide bond synthesis. Stimulates efficient translation and peptide-bond synthesis on native or reconstituted 70S ribosomes in vitro. Probably functions indirectly by altering the affinity of the ribosome for aminoacyl-tRNA, thus increasing their reactivity as acceptors for peptidyl transferase. This Acidiphilium cryptum (strain JF-5) protein is Elongation factor P.